We begin with the raw amino-acid sequence, 533 residues long: Dipeptide-binding protein (533 aa).

The N-terminal stretch at 1–24 (MRKILPLRAWLAAGLILGSPFSHA) is a signal peptide.

Belongs to the bacterial solute-binding protein 5 family.

The protein resides in the periplasm. In terms of biological role, binds different dipeptides. Probably bind only L-amino acid containing dipeptides. In Pseudomonas aeruginosa (strain ATCC 15692 / DSM 22644 / CIP 104116 / JCM 14847 / LMG 12228 / 1C / PRS 101 / PAO1), this protein is Dipeptide-binding protein.